Reading from the N-terminus, the 209-residue chain is Ubiquitin-conjugating enzyme E2 S (209 aa).

A UBC core domain is found at 14 to 160; sequence QTIRQVMREL…ARMMTEIHAQ (147 aa). The active-site Glycyl thioester intermediate is the cysteine 98. A disordered region spans residues 168–194; it reads AVGDAKDDGGPSTKKHAGLDKKLQDKK. The segment covering 184-194 has biased composition (basic and acidic residues); sequence AGLDKKLQDKK.

It belongs to the ubiquitin-conjugating enzyme family.

It carries out the reaction S-ubiquitinyl-[E1 ubiquitin-activating enzyme]-L-cysteine + [E2 ubiquitin-conjugating enzyme]-L-cysteine = [E1 ubiquitin-activating enzyme]-L-cysteine + S-ubiquitinyl-[E2 ubiquitin-conjugating enzyme]-L-cysteine.. The protein operates within protein modification; protein ubiquitination. Its function is as follows. Catalyzes the covalent attachment of ubiquitin to other proteins. Acts as an essential factor of the anaphase promoting complex/cyclosome (APC/C), a cell cycle-regulated ubiquitin ligase that controls progression through mitosis. Acts by specifically elongating polyubiquitin chains initiated by the E2 enzyme vih/UbcH10 on APC/C substrates, enhancing the degradation of APC/C substrates by the proteasome and promoting mitotic exit. The sequence is that of Ubiquitin-conjugating enzyme E2 S from Drosophila melanogaster (Fruit fly).